A 226-amino-acid polypeptide reads, in one-letter code: Ribose-5-phosphate isomerase A (226 aa).

Substrate is bound by residues 28–31, 84–87, and 97–100; these read TGST, DGAD, and KGLG. Glutamate 106 functions as the Proton acceptor in the catalytic mechanism. Lysine 124 serves as a coordination point for substrate.

It belongs to the ribose 5-phosphate isomerase family. As to quaternary structure, homodimer.

It catalyses the reaction aldehydo-D-ribose 5-phosphate = D-ribulose 5-phosphate. It participates in carbohydrate degradation; pentose phosphate pathway; D-ribose 5-phosphate from D-ribulose 5-phosphate (non-oxidative stage): step 1/1. Catalyzes the reversible conversion of ribose-5-phosphate to ribulose 5-phosphate. The sequence is that of Ribose-5-phosphate isomerase A from Deinococcus radiodurans (strain ATCC 13939 / DSM 20539 / JCM 16871 / CCUG 27074 / LMG 4051 / NBRC 15346 / NCIMB 9279 / VKM B-1422 / R1).